The primary structure comprises 125 residues: Small ribosomal subunit protein uS12m (125 aa).

A disordered region spans residues 1–27; that stretch reads MPTKNQLIRHGREEKRRTDRTRALDQC. Positions 10–23 are enriched in basic and acidic residues; that stretch reads HGREEKRRTDRTRA.

It belongs to the universal ribosomal protein uS12 family.

Its subcellular location is the mitochondrion. Functionally, protein S12 is involved in the translation initiation step. In Triticum aestivum (Wheat), this protein is Small ribosomal subunit protein uS12m (RPS12).